The chain runs to 585 residues: Probable phosphoglucomutase, cytoplasmic 2 (585 aa).

The tract at residues 1–20 (MVSFKVSLVSTSPIDGQKPG) is disordered. Alpha-D-glucose 1,6-bisphosphate is bound by residues Arg-25 and Ser-124. Catalysis depends on Ser-124, which acts as the Phosphoserine intermediate. Residues Ser-124, Asp-301, Asp-303, and Asp-305 each contribute to the Mg(2+) site. A Phosphoserine modification is found at Ser-124. Residues Asp-305, Arg-306, Thr-369, Glu-388, Ser-390, and Lys-401 each contribute to the alpha-D-glucose 1,6-bisphosphate site.

The protein belongs to the phosphohexose mutase family. In terms of assembly, monomer. Mg(2+) serves as cofactor.

It localises to the cytoplasm. The enzyme catalyses alpha-D-glucose 1-phosphate = alpha-D-glucose 6-phosphate. The catalysed reaction is O-phospho-L-seryl-[protein] + alpha-D-glucose 1-phosphate = alpha-D-glucose 1,6-bisphosphate + L-seryl-[protein]. It catalyses the reaction alpha-D-glucose 1,6-bisphosphate + L-seryl-[protein] = O-phospho-L-seryl-[protein] + alpha-D-glucose 6-phosphate. Its function is as follows. Catalyzes the reversible isomerization of alpha-D-glucose 1-phosphate to alpha-D-glucose 6-phosphate. The mechanism proceeds via the intermediate compound alpha-D-glucose 1,6-bisphosphate. This enzyme participates in both the breakdown and synthesis of glucose. The chain is Probable phosphoglucomutase, cytoplasmic 2 from Arabidopsis thaliana (Mouse-ear cress).